A 293-amino-acid polypeptide reads, in one-letter code: Elongation factor Ts (293 aa).

Residues 80–83 (TDFV) form an involved in Mg(2+) ion dislocation from EF-Tu region.

It belongs to the EF-Ts family.

Its subcellular location is the cytoplasm. Associates with the EF-Tu.GDP complex and induces the exchange of GDP to GTP. It remains bound to the aminoacyl-tRNA.EF-Tu.GTP complex up to the GTP hydrolysis stage on the ribosome. In Burkholderia cenocepacia (strain ATCC BAA-245 / DSM 16553 / LMG 16656 / NCTC 13227 / J2315 / CF5610) (Burkholderia cepacia (strain J2315)), this protein is Elongation factor Ts.